We begin with the raw amino-acid sequence, 471 residues long: 6-phosphofructo-2-kinase/fructose-2,6-bisphosphatase 1 (471 aa).

An N-acetylserine modification is found at S2. The interval 2–250 (SREMGELTQT…AYYLMNIHVT (249 aa)) is 6-phosphofructo-2-kinase. S33 is subject to Phosphoserine; by PKA. 49–57 (GLPARGKTY) lines the ATP pocket. R82 and R105 together coordinate beta-D-fructose 6-phosphate. D131 is a catalytic residue. Positions 133 and 139 each coordinate beta-D-fructose 6-phosphate. The residue at position 141 (S141) is a Phosphoserine. C161 is a catalytic residue. 170-175 (NIKQVK) serves as a coordination point for ATP. K175, R196, and Y200 together coordinate beta-D-fructose 6-phosphate. The fructose-2,6-bisphosphatase stretch occupies residues 251–471 (PRSIYLCRHG…EALDTVPAHY (221 aa)). R258 serves as a coordination point for beta-D-fructose 2,6-bisphosphate. H259 serves as the catalytic Tele-phosphohistidine intermediate. The beta-D-fructose 2,6-bisphosphate site is built by N265, G271, and R308. E328 functions as the Proton donor/acceptor in the catalytic mechanism. The beta-D-fructose 2,6-bisphosphate site is built by Y339, R353, K357, Y368, Q394, and R398. 350–353 (FALR) is an ATP binding site. ATP contacts are provided by residues 394–398 (QAVMR) and Y430.

In the C-terminal section; belongs to the phosphoglycerate mutase family. In terms of assembly, homodimer. Liver.

The catalysed reaction is beta-D-fructose 2,6-bisphosphate + H2O = beta-D-fructose 6-phosphate + phosphate. It carries out the reaction beta-D-fructose 6-phosphate + ATP = beta-D-fructose 2,6-bisphosphate + ADP + H(+). Phosphorylation at Ser-33 inhibits the kinase and activates the bisphosphatase. Functionally, synthesis and degradation of fructose 2,6-bisphosphate. In Rattus norvegicus (Rat), this protein is 6-phosphofructo-2-kinase/fructose-2,6-bisphosphatase 1.